The primary structure comprises 128 residues: MRHRKSGRHLSRTSSHRKAMFQNMAVSLFEHELIKTTLPKAKELRRVAEPLITLAKEDSVANRRLAFDRTRSKEIVGKLFNDLGKRYATRQGGYLRILKCGFRAGDNAPMAYVELVDRPIGGSVEAAE.

It belongs to the bacterial ribosomal protein bL17 family. As to quaternary structure, part of the 50S ribosomal subunit. Contacts protein L32.

The protein is Large ribosomal subunit protein bL17 of Pseudomonas syringae pv. syringae (strain B728a).